The following is a 424-amino-acid chain: Serine hydroxymethyltransferase (424 aa).

Residues L118 and 122 to 124 (GHL) each bind (6S)-5,6,7,8-tetrahydrofolate. The residue at position 227 (K227) is an N6-(pyridoxal phosphate)lysine. Position 351–353 (351–353 (SPF)) interacts with (6S)-5,6,7,8-tetrahydrofolate.

The protein belongs to the SHMT family. Homodimer. Pyridoxal 5'-phosphate is required as a cofactor.

Its subcellular location is the cytoplasm. The catalysed reaction is (6R)-5,10-methylene-5,6,7,8-tetrahydrofolate + glycine + H2O = (6S)-5,6,7,8-tetrahydrofolate + L-serine. It functions in the pathway one-carbon metabolism; tetrahydrofolate interconversion. The protein operates within amino-acid biosynthesis; glycine biosynthesis; glycine from L-serine: step 1/1. Its function is as follows. Catalyzes the reversible interconversion of serine and glycine with tetrahydrofolate (THF) serving as the one-carbon carrier. This reaction serves as the major source of one-carbon groups required for the biosynthesis of purines, thymidylate, methionine, and other important biomolecules. Also exhibits THF-independent aldolase activity toward beta-hydroxyamino acids, producing glycine and aldehydes, via a retro-aldol mechanism. The polypeptide is Serine hydroxymethyltransferase (Pseudothermotoga lettingae (strain ATCC BAA-301 / DSM 14385 / NBRC 107922 / TMO) (Thermotoga lettingae)).